A 1488-amino-acid chain; its full sequence is WD repeat-containing protein 7 (1488 aa).

WD repeat units follow at residues 17–56 (APTHCISSILLTDDGGTIVTGCHDGQICLWDLSEELEVNP), 62–104 (GHTA…CIEF), 156–199 (ISPD…SGLQ), 324–366 (VICP…DKQE), 404–443 (NEPLKVTASVYIPAHGRLVCGREDGSIIIVPATQTAIVQL), 462–507 (GHRN…MKHI), and 558–597 (RHLFPIQVIKWRPSDDYLVVGCTDGSVCVWQMDTGALDRC). 2 disordered regions span residues 761–781 (EEEDEEEVMRQRREESDPEYR) and 911–947 (GDHMKKGPTRPPRPGTPDLSKARDSPPASSNIVQGQI). Positions 768–781 (VMRQRREESDPEYR) are enriched in basic and acidic residues. Ser-935 bears the Phosphoserine mark. The segment covering 937 to 947 (PASSNIVQGQI) has biased composition (polar residues). 2 WD repeats span residues 1349 to 1388 (PAICRFYMVSYYERSHRIAVGARHGSVALYDIRTGKCQTI) and 1390 to 1430 (GHKG…LGSI). Phosphoserine is present on Ser-1454.

In Rattus norvegicus (Rat), this protein is WD repeat-containing protein 7 (Wdr7).